Here is a 168-residue protein sequence, read N- to C-terminus: HTH-type transcriptional regulator IscR (168 aa).

In terms of domain architecture, HTH rrf2-type spans 2 to 131 (KLTSKGRYAV…NNITLGELMT (130 aa)). The segment at residues 28 to 51 (LADISERQGISLSYLEQLFSKLRK) is a DNA-binding region (H-T-H motif). Residues Cys-92, Cys-98, and Cys-104 each coordinate [2Fe-2S] cluster.

The cofactor is [2Fe-2S] cluster.

Its function is as follows. Regulates the transcription of several operons and genes involved in the biogenesis of Fe-S clusters and Fe-S-containing proteins. The sequence is that of HTH-type transcriptional regulator IscR from Vibrio parahaemolyticus serotype O3:K6 (strain RIMD 2210633).